The chain runs to 343 residues: Aspartate beta-hydroxylase domain-containing protein 2 (343 aa).

At 1-31 (MWLEWLVAWSWSLDGLRDCIATGIQSVRDCD) the chain is on the cytoplasmic side. Residues 32 to 52 (GTAVITVACLLILFVWYCYHV) form a helical membrane-spanning segment. The Lumenal portion of the chain corresponds to 53 to 343 (GREQPRPHVS…ALDFIFAPGR (291 aa)). N-linked (GlcNAc...) asparagine glycosylation is found at Asn-77 and Asn-185. 2-oxoglutarate contacts are provided by Trp-202 and Ser-246. Fe cation is bound at residue His-257. A 2-oxoglutarate-binding site is contributed by 266–268 (RCH). Residue His-302 coordinates Fe cation. Arg-315 is a 2-oxoglutarate binding site.

Belongs to the aspartyl/asparaginyl beta-hydroxylase family. It depends on Fe cation as a cofactor.

It is found in the membrane. In terms of biological role, may function as 2-oxoglutarate-dependent dioxygenase. This chain is Aspartate beta-hydroxylase domain-containing protein 2 (Asphd2), found in Mus musculus (Mouse).